The primary structure comprises 175 residues: RNA pyrophosphohydrolase (175 aa).

Residues 6 to 149 form the Nudix hydrolase domain; it reads GYRPNVGIIL…KRQVYQQALT (144 aa). Positions 38–59 match the Nudix box motif; the sequence is GGIKHGESPEQAMYRELYEEVG.

Belongs to the Nudix hydrolase family. RppH subfamily. It depends on a divalent metal cation as a cofactor.

In terms of biological role, accelerates the degradation of transcripts by removing pyrophosphate from the 5'-end of triphosphorylated RNA, leading to a more labile monophosphorylated state that can stimulate subsequent ribonuclease cleavage. The polypeptide is RNA pyrophosphohydrolase (Azoarcus sp. (strain BH72)).